The following is a 306-amino-acid chain: uncharacterized protein (306 aa).

10 helical membrane-spanning segments follow: residues 6–26, 35–55, 69–89, 98–118, 122–142, 154–174, 186–206, 211–231, 247–267, and 281–301; these read LLGFTFALITAMAWGSLPIAL, AQTIVWYRFIIAAVSLLALLA, YAWIMLIGVIGLTSNFLLFSS, VAQIFIHLSSFGMLICGVLIF, LGLHQKIGLFLLLIGLGLFFN, YSTGVILGVGGALIWVAYGMA, QILLMMYLGCAIAFMPMADFS, LTPLALICFIYCCLNTLIGYG, VVITLVPLFTILFSHIAHYFS, and YIGAFVVVCGAILSAIGHKLL. EamA domains are found at residues 17–142 and 166–296; these read MAWG…LFFN and LIWV…LSAI.

It belongs to the EamA transporter family.

It localises to the cell membrane. This is an uncharacterized protein from Haemophilus influenzae (strain ATCC 51907 / DSM 11121 / KW20 / Rd).